Consider the following 736-residue polypeptide: Melanotransferrin (736 aa).

Positions 1–19 (MRCRSAAMWIFLALRTALG) are cleaved as a signal peptide. Transferrin-like domains are found at residues 23-357 (VRWC…GLLC) and 366-706 (LRWC…GMQS). Cystine bridges form between C26–C63 and C36–C54. Residues D78 and Y107 each contribute to the Fe(3+) site. N118 carries an N-linked (GlcNAc...) asparagine glycan. Cystine bridges form between C130–C216, C172–C189, C186–C199, and C257–C271. A hydrogencarbonate-binding site is contributed by T132. N-linked (GlcNAc...) asparagine glycosylation occurs at N135. Positions 136, 138, and 139 each coordinate hydrogencarbonate. Y210 lines the Fe(3+) pocket. Residues H279 and Y451 each contribute to the Fe(3+) site. N515 carries N-linked (GlcNAc...) asparagine glycosylation. Residue H625 participates in Fe(3+) binding. Residue G711 is the site of GPI-anchor amidated glycine attachment. The propeptide at 712 to 736 (AAVGAPGASLLPLLPLAVGLLLSSL) is removed in mature form.

The protein belongs to the transferrin family.

Its subcellular location is the cell membrane. In terms of biological role, involved in iron cellular uptake. Seems to be internalized and then recycled back to the cell membrane. Binds a single atom of iron per subunit. Could also bind zinc. The protein is Melanotransferrin of Oryctolagus cuniculus (Rabbit).